Reading from the N-terminus, the 248-residue chain is Tyrosine recombinase XerD-like (248 aa).

A Core-binding (CB) domain is found at 1–72; sequence MKSYIEPFIA…TANQFLYYLY (72 aa). A Tyr recombinase domain is found at 85–248; the sequence is DTMKVMRTEK…PVTLEKYYKS (164 aa). Residues Lys149 and Arg213 contribute to the active site. The O-(3'-phospho-DNA)-tyrosine intermediate role is filled by Tyr245.

It belongs to the 'phage' integrase family. XerD-like subfamily.

It localises to the cytoplasm. Functionally, putative tyrosine recombinase. Not involved in the cutting and rejoining of the recombining DNA molecules on dif(SL) site. The sequence is that of Tyrosine recombinase XerD-like from Streptococcus pyogenes serotype M28 (strain MGAS6180).